Reading from the N-terminus, the 400-residue chain is Large envelope protein (400 aa).

N-acetylmethionine is present on Met-1. Residue Gly-2 is the site of N-myristoyl glycine; by host attachment. Residues 2–119 (GAPLSTTRRG…PPLRDTHPQA (118 aa)) form a pre-S1 region. The pre-S stretch occupies residues 2–174 (GAPLSTTRRG…FSKTGGPAMN (173 aa)). The Virion surface; in external conformation segment spans residues 2-181 (GAPLSTTRRG…AMNMDNITSG (180 aa)). Residues 2–253 (GAPLSTTRRG…PGYRWMCLRR (252 aa)) are Intravirion; in internal conformation-facing. N-linked (GlcNAc...) asparagine glycosylation is present at Pro-4. Residues 84-117 (VLTTLPADPPPASTNRRSGRKPTPVSPPLRDTHP) are disordered. The segment at 120–174 (MQWNSTQFHQALLDPRVRALYFPAGGSSSGTQNPAPTIASLTSSIFSKTGGPAMN) is pre-S2. The chain crosses the membrane as a helical span at residues 182-202 (LLGPLLVLQAVCFLLTKILTI). Topologically, residues 203 to 253 (PQSLDSWWTSLNFLGGLPGCPGQNSQSPTSNHLPTSCPPTCPGYRWMCLRR) are intravirion; in external conformation. A helical membrane pass occupies residues 254–274 (FIIFLFILLLCLIFLLVLLDY). The Virion surface segment spans residues 275-348 (QGMLPVCPLL…WASARFSWLS (74 aa)). The N-linked (GlcNAc...) asparagine; by host glycan is linked to Asn-320. Residues 349 to 369 (LLVQFVQWCVGLSPTVWLLVI) traverse the membrane as a helical segment. Topologically, residues 370–375 (WMIWYW) are intravirion. Residues 376–398 (GPNLCSILSPFIPLLPIFCYLWV) traverse the membrane as a helical segment. The Virion surface segment spans residues 399–400 (SI).

Belongs to the orthohepadnavirus major surface antigen family. As to quaternary structure, in its internal form (Li-HBsAg), interacts with the capsid protein and with the isoform S. Interacts with host chaperone CANX. In terms of assembly, associates with host chaperone CANX through its pre-S2 N glycan; this association may be essential for isoform M proper secretion. Interacts with isoform L. Interacts with the antigens of satellite virus HDV (HDVAgs); this interaction is required for encapsidation of HDV genomic RNA. Post-translationally, isoform M is N-terminally acetylated by host at a ratio of 90%, and N-glycosylated by host at the pre-S2 region. In terms of processing, myristoylated.

It localises to the virion membrane. In terms of biological role, the large envelope protein exists in two topological conformations, one which is termed 'external' or Le-HBsAg and the other 'internal' or Li-HBsAg. In its external conformation the protein attaches the virus to cell receptors and thereby initiating infection. This interaction determines the species specificity and liver tropism. This attachment induces virion internalization predominantly through caveolin-mediated endocytosis. The large envelope protein also assures fusion between virion membrane and endosomal membrane. In its internal conformation the protein plays a role in virion morphogenesis and mediates the contact with the nucleocapsid like a matrix protein. The middle envelope protein plays an important role in the budding of the virion. It is involved in the induction of budding in a nucleocapsid independent way. In this process the majority of envelope proteins bud to form subviral lipoprotein particles of 22 nm of diameter that do not contain a nucleocapsid. This Hepatitis B virus genotype F2 (isolate Brazil/w4B) (HBV-F) protein is Large envelope protein.